The following is a 411-amino-acid chain: NADH-quinone oxidoreductase subunit H (411 aa).

9 helical membrane-spanning segments follow: residues 18 to 38 (LAKS…AILI), 84 to 104 (WIYL…FAVI), 124 to 144 (LPVA…GIVL), 165 to 185 (VISY…YAGT), 198 to 218 (TWYI…MVGE), 260 to 280 (VSAL…PISI), 288 to 308 (WWPL…FMWL), 321 to 341 (MALG…IVAI), and 352 to 372 (APAT…ALLG).

The protein belongs to the complex I subunit 1 family. In terms of assembly, NDH-1 is composed of 14 different subunits. Subunits NuoA, H, J, K, L, M, N constitute the membrane sector of the complex.

It localises to the cell membrane. The catalysed reaction is a quinone + NADH + 5 H(+)(in) = a quinol + NAD(+) + 4 H(+)(out). NDH-1 shuttles electrons from NADH, via FMN and iron-sulfur (Fe-S) centers, to quinones in the respiratory chain. The immediate electron acceptor for the enzyme in this species is believed to be menaquinone. Couples the redox reaction to proton translocation (for every two electrons transferred, four hydrogen ions are translocated across the cytoplasmic membrane), and thus conserves the redox energy in a proton gradient. This subunit may bind ubiquinone. This Mycolicibacterium vanbaalenii (strain DSM 7251 / JCM 13017 / BCRC 16820 / KCTC 9966 / NRRL B-24157 / PYR-1) (Mycobacterium vanbaalenii) protein is NADH-quinone oxidoreductase subunit H.